A 462-amino-acid chain; its full sequence is Lysophospholipid acyltransferase 1 (462 aa).

The next 9 helical transmembrane spans lie at 9–29, 52–72, 84–104, 158–178, 211–231, 263–283, 353–373, 396–416, and 431–451; these read SIGVSVAVLRFLLCFVATIPV, FLSYLSFGFSSNLHFLVPMTI, CGIITFFLGFAYLIGCHVFYM, SLIEYFGYCLCCGSHFAGPVY, AILQAAICMALYLYLVPQYPL, YFIWSISEASIIISGLGFSGW, AVWHGLYPGYMMFFVQSALMI, IMVFINFLYTVLVLNYSAVGF, and VYYIGTIIPVGLILLSYVVPA. The active site involves His356.

The protein belongs to the membrane-bound acyltransferase family. As to expression, expressed in roots, rosette leaves, petals, stigma, chalazal endosperm of developing seeds and vascular bundles of siliques.

The protein localises to the endoplasmic reticulum membrane. The enzyme catalyses a 1-acyl-sn-glycero-3-phosphocholine + an acyl-CoA = a 1,2-diacyl-sn-glycero-3-phosphocholine + CoA. It carries out the reaction 1-(9Z-octadecenoyl)-sn-glycero-3-phosphocholine + (9Z)-octadecenoyl-CoA = 1,2-di-(9Z-octadecenoyl)-sn-glycero-3-phosphocholine + CoA. It catalyses the reaction 1-(9Z-octadecenoyl)-sn-glycero-3-phosphocholine + (9Z,12Z)-octadecadienoyl-CoA = 1-(9Z)-octadecenoyl-2-(9Z,12Z)-octadecadienoyl-sn-glycero-3-phosphocholine + CoA. The catalysed reaction is (9Z,12Z,15Z)-octadecatrienoyl-CoA + 1-(9Z-octadecenoyl)-sn-glycero-3-phosphocholine = 1-(9Z-octadecaenoyl)-2-(9Z,12Z,15Z-octadecatrienoyl)-sn-glycero-3-phosphocholine + CoA. The enzyme catalyses a 1-acyl-sn-glycero-3-phosphoethanolamine + an acyl-CoA = a 1,2-diacyl-sn-glycero-3-phosphoethanolamine + CoA. It carries out the reaction a 1-acyl-sn-glycero-3-phospho-L-serine + an acyl-CoA = a 1,2-diacyl-sn-glycero-3-phospho-L-serine + CoA. Its function is as follows. Lysophospholipid acyltransferase with broad specificity. Mediates the conversion of lysophosphatidylethanolamine (1-acyl-sn-glycero-3-phosphoethanolamine or LPE) into phosphatidylethanolamine (1,2-diacyl-sn-glycero-3-phosphoethanolamine or PE) (LPEAT activity). Catalyzes the acylation of lysophosphatidylserine (1-acyl-2-hydroxy-sn-glycero-3-phospho-L-serine or LPS) into phosphatidylserine (1,2-diacyl-sn-glycero-3-phospho-L-serine or PS) (LPSAT activity). Can convert lysophosphatidylcholine (1-acyl-sn-glycero-3-phosphocholine or LPC) into phosphatidylcholine (1,2-diacyl-sn-glycero-3-phosphocholine or PC) (LPCAT activity). Exhibits preference for C18-unsaturated acyl-CoA when transferring an acyl group to lysophosphatidylcholine. Can also utilize lysophosphatidylglycerol (LPG) as substrate in vitro. Has neither activity towards lysophosphatidic acid (LPA) nor lysophosphatidylinositol (LPI). Lysophospholipid acyltransferases catalyze the reacylation step of the phospholipid remodeling pathway also known as the Lands cycle. The primary function of the Lands cycle is to provide a route for acyl remodeling to modify fatty acid (FA) composition of phospholipids derived from the Kennedy pathway. Is involved in PC acyl editing and phosphocholine headgroup exchange between PC and diacylglycerols. This processes control the majority of acyl fluxes through PC to provide polyunsaturated fatty acids for triacylglycerols synthesis in seeds. Involved with LPCAT2 in the direct incorporation of newly synthesized fatty acids exported form the chloroplast into PC through acyl editing. This chain is Lysophospholipid acyltransferase 1, found in Arabidopsis thaliana (Mouse-ear cress).